The sequence spans 69 residues: Large ribosomal subunit protein bL32c (69 aa).

It belongs to the bacterial ribosomal protein bL32 family.

It localises to the plastid. It is found in the chloroplast. The polypeptide is Large ribosomal subunit protein bL32c (rpl32) (Anthoceros angustus (Hornwort)).